The chain runs to 733 residues: Putative cyclic nucleotide-gated ion channel 9 (733 aa).

The Cytoplasmic segment spans residues 1-117 (MLDCGKKAVK…DKFLLLCNKL (117 aa)). The chain crosses the membrane as a helical span at residues 118 to 138 (FVTSCILAVSVDPLFLYLPFV). The Extracellular segment spans residues 139–151 (KDNEKCIGIDRKL). The chain crosses the membrane as a helical span at residues 152–172 (AIIATTLRTVIDAFYLFHMAL). Residues 173-207 (RFRTAFVAPSSRVFGRGELVIDPAQIAKRYLQQYF) lie on the Cytoplasmic side of the membrane. The helical transmembrane segment at 208-228 (IIDFLSVLPLPQIVVWRFLYI) threads the bilayer. Topologically, residues 229-239 (SKGASVLATKR) are extracellular. The helical transmembrane segment at 240 to 260 (ALRSIILVQYIPRFIRLYPLS) threads the bilayer. Residues 261 to 280 (SELKRTAGVFAETAWAGAAY) lie on the Cytoplasmic side of the membrane. Residues 281 to 301 (YLLLYMLASHIVGAIWYLLAL) form a helical membrane-spanning segment. Residues 302 to 406 (ERYNGCWTKV…GQGLETSTYP (105 aa)) lie on the Extracellular side of the membrane. The chain crosses the membrane as a helical span at residues 407-427 (GEVIFSIALAIAGLLLFALLI). At 428-733 (GNMQTYLQSL…EPDFSADDTS (306 aa)) the chain is on the cytoplasmic side. Residues 513 to 637 (LFEN…SRQV) and glutamate 584 contribute to the a nucleoside 3',5'-cyclic phosphate site. Positions 629–644 (FRRLHSRQVQHTFRFY) are calmodulin-binding. In terms of domain architecture, IQ spans 649 to 678 (RTWAAIFIQAAWRRYVKKKKLEQLRKEEEE).

It belongs to the cyclic nucleotide-gated cation channel (TC 1.A.1.5) family. Homotetramer or heterotetramer.

It is found in the cell membrane. Putative cyclic nucleotide-gated ion channel. This chain is Putative cyclic nucleotide-gated ion channel 9 (CNGC9), found in Arabidopsis thaliana (Mouse-ear cress).